A 590-amino-acid polypeptide reads, in one-letter code: Oligoendopeptidase F homolog (590 aa).

His381 lines the Zn(2+) pocket. Glu382 is an active-site residue. Zn(2+) is bound by residues His385 and His388.

The protein belongs to the peptidase M3B family. Zn(2+) serves as cofactor.

In Borreliella burgdorferi (strain ATCC 35210 / DSM 4680 / CIP 102532 / B31) (Borrelia burgdorferi), this protein is Oligoendopeptidase F homolog (pepF).